Consider the following 267-residue polypeptide: 3-methyl-2-oxobutanoate hydroxymethyltransferase (267 aa).

Residues D45 and D84 each coordinate Mg(2+). 3-methyl-2-oxobutanoate-binding positions include 45 to 46 (DS), D84, and K113. E115 is a binding site for Mg(2+). Catalysis depends on E182, which acts as the Proton acceptor.

Belongs to the PanB family. Homodecamer; pentamer of dimers. Requires Mg(2+) as cofactor.

It localises to the cytoplasm. The catalysed reaction is 3-methyl-2-oxobutanoate + (6R)-5,10-methylene-5,6,7,8-tetrahydrofolate + H2O = 2-dehydropantoate + (6S)-5,6,7,8-tetrahydrofolate. Its pathway is cofactor biosynthesis; coenzyme A biosynthesis. Catalyzes the reversible reaction in which hydroxymethyl group from 5,10-methylenetetrahydrofolate is transferred onto alpha-ketoisovalerate to form ketopantoate. The polypeptide is 3-methyl-2-oxobutanoate hydroxymethyltransferase (Saccharolobus solfataricus (strain ATCC 35092 / DSM 1617 / JCM 11322 / P2) (Sulfolobus solfataricus)).